Here is a 377-residue protein sequence, read N- to C-terminus: Glutamate 5-kinase (377 aa).

Lys20 provides a ligand contact to ATP. Substrate-binding residues include Ser59, Asp146, and Asn158. Residues 178–179 (SD) and 220–226 (TGGMSTK) contribute to the ATP site. Positions 285–363 (RGTLTVDAGA…ADIEAVLGYR (79 aa)) constitute a PUA domain.

Belongs to the glutamate 5-kinase family.

The protein localises to the cytoplasm. It catalyses the reaction L-glutamate + ATP = L-glutamyl 5-phosphate + ADP. The protein operates within amino-acid biosynthesis; L-proline biosynthesis; L-glutamate 5-semialdehyde from L-glutamate: step 1/2. Functionally, catalyzes the transfer of a phosphate group to glutamate to form L-glutamate 5-phosphate. This Myxococcus xanthus (strain DK1622) protein is Glutamate 5-kinase.